A 176-amino-acid polypeptide reads, in one-letter code: Protein GrpE (176 aa).

The protein belongs to the GrpE family. As to quaternary structure, homodimer.

Its subcellular location is the cytoplasm. In terms of biological role, participates actively in the response to hyperosmotic and heat shock by preventing the aggregation of stress-denatured proteins, in association with DnaK and GrpE. It is the nucleotide exchange factor for DnaK and may function as a thermosensor. Unfolded proteins bind initially to DnaJ; upon interaction with the DnaJ-bound protein, DnaK hydrolyzes its bound ATP, resulting in the formation of a stable complex. GrpE releases ADP from DnaK; ATP binding to DnaK triggers the release of the substrate protein, thus completing the reaction cycle. Several rounds of ATP-dependent interactions between DnaJ, DnaK and GrpE are required for fully efficient folding. This Rickettsia bellii (strain OSU 85-389) protein is Protein GrpE.